The following is a 60-amino-acid chain: Large ribosomal subunit protein bL32 (60 aa).

The tract at residues 1–60 (MAVQQNKKSPSKRGMHRSHDALTNPPLAIEPTTGETHLRHHISPNGFYRGKKVIKTKNDD) is disordered. The span at 49–60 (RGKKVIKTKNDD) shows a compositional bias: basic residues.

Belongs to the bacterial ribosomal protein bL32 family.

The chain is Large ribosomal subunit protein bL32 from Nitrosomonas eutropha (strain DSM 101675 / C91 / Nm57).